The sequence spans 323 residues: Ficolin-2 (323 aa).

An N-terminal signal peptide occupies residues 1–26 (MDTRGVAAAMRPLVLLVAFLCTAAPA). The region spanning 52 to 102 (GLPGAAGPKGEAGASGPKGGQGPPGAPGEPGPPGPKGDRGEKGEPGPKGES) is the Collagen-like domain. The span at 55–66 (GAAGPKGEAGAS) shows a compositional bias: low complexity. Residues 55–107 (GAAGPKGEAGASGPKGGQGPPGAPGEPGPPGPKGDRGEKGEPGPKGESWETEQ) are disordered. Residues 75–86 (PGAPGEPGPPGP) are compositionally biased toward pro residues. The span at 87–102 (KGDRGEKGEPGPKGES) shows a compositional bias: basic and acidic residues. The 218-residue stretch at 106–323 (EQCLTGPRTC…KVSEMKFRAT (218 aa)) folds into the Fibrinogen C-terminal domain. Cystine bridges form between C108/C136 and C115/C143. A glycan (N-linked (GlcNAc...) asparagine) is linked at N249. 3 residues coordinate Ca(2+): D259, D261, and S265. C267 and C280 are disulfide-bonded. N302 and N310 each carry an N-linked (GlcNAc...) asparagine glycan.

This sequence belongs to the ficolin lectin family. Homotrimer. Interacts with elastin. Interacts with MASP1 and MASP2. As to expression, mainly expressed in skeletal muscle.

Its subcellular location is the secreted. May function in innate immunity through activation of the lectin complement pathway. Calcium-dependent and GlcNAc-binding lectin. This Sus scrofa (Pig) protein is Ficolin-2 (FCN2).